The sequence spans 2141 residues: Oxygen-regulated protein 1 (2141 aa).

Positions Met1–Ser10 are enriched in polar residues. The disordered stretch occupies residues Met1 to Gly20. A Doublecortin 1 domain is found at Lys34–Asp116. Residues Leu126–Pro149 are disordered. In terms of domain architecture, Doublecortin 2 spans Arg156 to Asp235. 3 disordered regions span residues Arg259 to Tyr278, Tyr1432 to Arg1458, and Asp1589 to Gly1612. Residues His268–Tyr278 show a composition bias toward polar residues. Positions Ser1435–Glu1444 are enriched in basic and acidic residues. 2 stretches are compositionally biased toward polar residues: residues Ser1448–Arg1458 and Glu1598–Pro1610.

In terms of assembly, interacts (via the doublecortin domains) with microtubules. Interacts with RP1L1. Interacts with MAK.

Its subcellular location is the cytoplasm. It localises to the cytoskeleton. It is found in the cilium axoneme. The protein resides in the cell projection. The protein localises to the cilium. Its subcellular location is the photoreceptor outer segment. Functionally, microtubule-associated protein regulating the stability and length of the microtubule-based axoneme of photoreceptors. Required for the differentiation of photoreceptor cells, it plays a role in the organization of the outer segment of rod and cone photoreceptors ensuring the correct orientation and higher-order stacking of outer segment disks along the photoreceptor axoneme. The protein is Oxygen-regulated protein 1 (RP1) of Canis lupus familiaris (Dog).